The sequence spans 236 residues: Purine nucleoside phosphorylase DeoD-type (236 aa).

Histidine 4 lines the a purine D-ribonucleoside pocket. Residues glycine 20, arginine 24, arginine 43, and 87-90 each bind phosphate; that span reads RVGT. Residues 179-181 and 203-204 each bind a purine D-ribonucleoside; these read EME and SD. Aspartate 204 serves as the catalytic Proton donor.

Belongs to the PNP/UDP phosphorylase family. Homohexamer; trimer of homodimers.

It catalyses the reaction a purine D-ribonucleoside + phosphate = a purine nucleobase + alpha-D-ribose 1-phosphate. The enzyme catalyses a purine 2'-deoxy-D-ribonucleoside + phosphate = a purine nucleobase + 2-deoxy-alpha-D-ribose 1-phosphate. Catalyzes the reversible phosphorolytic breakdown of the N-glycosidic bond in the beta-(deoxy)ribonucleoside molecules, with the formation of the corresponding free purine bases and pentose-1-phosphate. The protein is Purine nucleoside phosphorylase DeoD-type of Streptococcus pneumoniae (strain CGSP14).